A 440-amino-acid polypeptide reads, in one-letter code: 3-phosphoshikimate 1-carboxyvinyltransferase (440 aa).

3 residues coordinate 3-phosphoshikimate: lysine 25, serine 26, and arginine 30. Lysine 25 contacts phosphoenolpyruvate. Residues glycine 96 and arginine 124 each contribute to the phosphoenolpyruvate site. Positions 168, 169, 310, and 337 each coordinate 3-phosphoshikimate. Residue glutamine 169 coordinates phosphoenolpyruvate. The Proton acceptor role is filled by aspartate 310. Phosphoenolpyruvate-binding residues include arginine 341, arginine 382, and lysine 409.

Belongs to the EPSP synthase family. As to quaternary structure, monomer.

The protein resides in the cytoplasm. It carries out the reaction 3-phosphoshikimate + phosphoenolpyruvate = 5-O-(1-carboxyvinyl)-3-phosphoshikimate + phosphate. It functions in the pathway metabolic intermediate biosynthesis; chorismate biosynthesis; chorismate from D-erythrose 4-phosphate and phosphoenolpyruvate: step 6/7. Catalyzes the transfer of the enolpyruvyl moiety of phosphoenolpyruvate (PEP) to the 5-hydroxyl of shikimate-3-phosphate (S3P) to produce enolpyruvyl shikimate-3-phosphate and inorganic phosphate. The protein is 3-phosphoshikimate 1-carboxyvinyltransferase of Chlamydia trachomatis serovar D (strain ATCC VR-885 / DSM 19411 / UW-3/Cx).